The following is a 157-amino-acid chain: MKVSLMAAKAKNGVIGCGPHIPWSAKGEQLLFKALTYNQWLLVGRKTFESMGALPNRKYAVVTRSAWTADNDNVIVFPSIEEAMYGLAELTDHVIVSGGGEIYRETLPMASTLHISTIDIEPEGDVFFPNIPNTFEVVFEQHFSSNINYCYQIWQKG.

One can recognise a DHFR domain in the interval Lys2–Lys156.

It belongs to the dihydrofolate reductase family. In terms of assembly, homodimer.

It carries out the reaction (6S)-5,6,7,8-tetrahydrofolate + NADP(+) = 7,8-dihydrofolate + NADPH + H(+). The protein operates within cofactor biosynthesis; tetrahydrofolate biosynthesis; 5,6,7,8-tetrahydrofolate from 7,8-dihydrofolate: step 1/1. Key enzyme in folate metabolism. Catalyzes an essential reaction for de novo glycine and purine synthesis, and for DNA precursor synthesis. The sequence is that of Dihydrofolate reductase type 5 (dhfrV) from Escherichia coli.